The chain runs to 83 residues: MALKREIQGVVLQKAGDKTATILVERRVMHPRYHKFVKRFKKYLVHDEKNETRAGDTVVAVECRPLSARKNFRLKAVLAKGVE.

The protein belongs to the universal ribosomal protein uS17 family. As to quaternary structure, part of the 30S ribosomal subunit.

Its function is as follows. One of the primary rRNA binding proteins, it binds specifically to the 5'-end of 16S ribosomal RNA. The sequence is that of Small ribosomal subunit protein uS17 from Campylobacter concisus (strain 13826).